A 330-amino-acid polypeptide reads, in one-letter code: Solute-binding protein NAS141_03721 (330 aa).

The signal sequence occupies residues M1–A27. Alpha-D-mannuronate is bound by residues E75, N97, R153, R173, Y196, N213 to E214, and R240. Residues E75, N97, R153, R173, Y196, N213–E214, and R240 contribute to the alpha-D-taluronate site.

The protein belongs to the bacterial solute-binding protein 7 family. The complex is comprised of an extracytoplasmic solute-binding protein and a heteromeric permease formed by two transmembrane proteins.

Its subcellular location is the periplasm. Solute-binding protein that binds D-mannuronate and D-taluronate (in vitro). Probably part of a tripartite ATP-independent periplasmic (TRAP) transport system that mediates solute transport into the cytoplasm. In Sulfitobacter sp. (strain NAS-14.1), this protein is Solute-binding protein NAS141_03721.